A 187-amino-acid chain; its full sequence is Accessory gene regulator protein B (187 aa).

5 helical membrane passes run 49–69 (LAYILNIFIFTLITNISFYLI), 82–102 (FWCYIESITLFIVLPLLVLHF), 107–127 (TLMMFLALLSVGVVIKYAPAA), 143–163 (YFSIIISTILFIITLFVKEPY), and 164–184 (TQFIQLGIIIQAITLLPIYYS).

Belongs to the AgrB family.

The protein resides in the cell membrane. Its function is as follows. Essential for the production of a quorum sensing system signal molecule, the autoinducing peptide (AIP). This quorum sensing system is responsible for the regulation of the expression of virulence factor genes. Involved in the proteolytic processing of AgrD, the precursor of AIP. In Staphylococcus aureus (strain MRSA252), this protein is Accessory gene regulator protein B.